A 325-amino-acid chain; its full sequence is Tetraacyldisaccharide 4'-kinase (325 aa).

ATP is bound at residue 55-62 (TAGGNGKT).

The protein belongs to the LpxK family.

The enzyme catalyses a lipid A disaccharide + ATP = a lipid IVA + ADP + H(+). Its pathway is glycolipid biosynthesis; lipid IV(A) biosynthesis; lipid IV(A) from (3R)-3-hydroxytetradecanoyl-[acyl-carrier-protein] and UDP-N-acetyl-alpha-D-glucosamine: step 6/6. In terms of biological role, transfers the gamma-phosphate of ATP to the 4'-position of a tetraacyldisaccharide 1-phosphate intermediate (termed DS-1-P) to form tetraacyldisaccharide 1,4'-bis-phosphate (lipid IVA). The protein is Tetraacyldisaccharide 4'-kinase of Salmonella paratyphi C (strain RKS4594).